We begin with the raw amino-acid sequence, 218 residues long: Glycerol-3-phosphate acyltransferase (218 aa).

A run of 5 helical transmembrane segments spans residues 4–24 (IALG…AILI), 54–74 (TAAI…WLAY), 80–100 (PFYL…PIFF), 107–127 (GVAT…GLMM), and 130–150 (WLLT…SALI).

It belongs to the PlsY family. In terms of assembly, probably interacts with PlsX.

The protein resides in the cell inner membrane. The catalysed reaction is an acyl phosphate + sn-glycerol 3-phosphate = a 1-acyl-sn-glycero-3-phosphate + phosphate. It functions in the pathway lipid metabolism; phospholipid metabolism. In terms of biological role, catalyzes the transfer of an acyl group from acyl-phosphate (acyl-PO(4)) to glycerol-3-phosphate (G3P) to form lysophosphatidic acid (LPA). This enzyme utilizes acyl-phosphate as fatty acyl donor, but not acyl-CoA or acyl-ACP. The protein is Glycerol-3-phosphate acyltransferase of Photorhabdus laumondii subsp. laumondii (strain DSM 15139 / CIP 105565 / TT01) (Photorhabdus luminescens subsp. laumondii).